A 303-amino-acid chain; its full sequence is Eukaryotic translation initiation factor 3 subunit F (303 aa).

Residues methionine 1–isoleucine 10 show a composition bias toward polar residues. The interval methionine 1 to serine 25 is disordered. Low complexity predominate over residues leucine 12–serine 25. The region spanning isoleucine 27–glycine 165 is the MPN domain.

The protein belongs to the eIF-3 subunit F family. Component of the eukaryotic translation initiation factor 3 (eIF-3) complex.

It is found in the cytoplasm. Component of the eukaryotic translation initiation factor 3 (eIF-3) complex, which is involved in protein synthesis of a specialized repertoire of mRNAs and, together with other initiation factors, stimulates binding of mRNA and methionyl-tRNAi to the 40S ribosome. The eIF-3 complex specifically targets and initiates translation of a subset of mRNAs involved in cell proliferation. The sequence is that of Eukaryotic translation initiation factor 3 subunit F from Cryptococcus neoformans var. neoformans serotype D (strain B-3501A) (Filobasidiella neoformans).